The chain runs to 282 residues: Gap junction Cx32.7 protein (282 aa).

The Cytoplasmic portion of the chain corresponds to 2–13; sequence GEWDLLGRLLDK. A helical transmembrane segment spans residues 14–36; the sequence is VQSHSTVIGKVWLTVLFVFRILV. At 37–76 the chain is on the extracellular side; that stretch reads LRTGADRVWGDEQSDFVCNTQQPGCENVCYDLAFPISHVR. Residues 77 to 99 form a helical membrane-spanning segment; the sequence is FWFLQIIAVATPKLLYLGHVLHV. At 100–148 the chain is on the cytoplasmic side; that stretch reads IHAEKKMKERMKKQAELDDQTNLFLRKAYKVPKYTKSSGKISIRGRLLR. The helical transmembrane segment at 149–171 threads the bilayer; sequence SYVYHLVAKIILEVLFIVGQYFL. Over 172-203 the chain is Extracellular; the sequence is YGFTLDTRYVCTRFPCPHKVDCFLSRPTEKSV. A helical membrane pass occupies residues 204 to 226; it reads IIWFMLVAAFVSLFLSLVELFYL. The Cytoplasmic segment spans residues 227–282; sequence CVKAAKECMARRQDYTVTPVTPPLLARKSFKSHKEVFQNCVNEPASPENNMEEVHI.

This sequence belongs to the connexin family. Alpha-type (group II) subfamily. In terms of assembly, a connexon is composed of a hexamer of connexins. In terms of tissue distribution, expressed equally in incompetent and competent ovaries.

The protein localises to the cell membrane. The protein resides in the cell junction. It is found in the gap junction. Functionally, one gap junction consists of a cluster of closely packed pairs of transmembrane channels, the connexons, through which materials of low MW diffuse from one cell to a neighboring cell. In Micropogonias undulatus (Atlantic croaker), this protein is Gap junction Cx32.7 protein.